A 426-amino-acid polypeptide reads, in one-letter code: Serine--tRNA ligase (426 aa).

The interval 36 to 66 (KRKHLQERTQDLQSQRNTISKEIGQKKAKGE) is disordered. Positions 46–55 (DLQSQRNTIS) are enriched in polar residues. 233 to 235 (TAE) contributes to the L-serine binding site. ATP is bound at residue 264–266 (RSE). E287 contacts L-serine. 351–354 (EISS) provides a ligand contact to ATP. L-serine is bound at residue S387.

Belongs to the class-II aminoacyl-tRNA synthetase family. Type-1 seryl-tRNA synthetase subfamily. In terms of assembly, homodimer. The tRNA molecule binds across the dimer.

The protein localises to the cytoplasm. The enzyme catalyses tRNA(Ser) + L-serine + ATP = L-seryl-tRNA(Ser) + AMP + diphosphate + H(+). It carries out the reaction tRNA(Sec) + L-serine + ATP = L-seryl-tRNA(Sec) + AMP + diphosphate + H(+). The protein operates within aminoacyl-tRNA biosynthesis; selenocysteinyl-tRNA(Sec) biosynthesis; L-seryl-tRNA(Sec) from L-serine and tRNA(Sec): step 1/1. Catalyzes the attachment of serine to tRNA(Ser). Is also able to aminoacylate tRNA(Sec) with serine, to form the misacylated tRNA L-seryl-tRNA(Sec), which will be further converted into selenocysteinyl-tRNA(Sec). In Francisella tularensis subsp. tularensis (strain FSC 198), this protein is Serine--tRNA ligase.